The sequence spans 335 residues: tRNA N6-adenosine threonylcarbamoyltransferase (335 aa).

Residues histidine 107 and histidine 111 each contribute to the Fe cation site. Substrate-binding positions include 129 to 133 (LVSGG), aspartate 162, glycine 175, and asparagine 268. Aspartate 296 provides a ligand contact to Fe cation.

It belongs to the KAE1 / TsaD family. Requires Fe(2+) as cofactor.

Its subcellular location is the cytoplasm. The catalysed reaction is L-threonylcarbamoyladenylate + adenosine(37) in tRNA = N(6)-L-threonylcarbamoyladenosine(37) in tRNA + AMP + H(+). Required for the formation of a threonylcarbamoyl group on adenosine at position 37 (t(6)A37) in tRNAs that read codons beginning with adenine. Is involved in the transfer of the threonylcarbamoyl moiety of threonylcarbamoyl-AMP (TC-AMP) to the N6 group of A37, together with TsaE and TsaB. TsaD likely plays a direct catalytic role in this reaction. This chain is tRNA N6-adenosine threonylcarbamoyltransferase, found in Campylobacter fetus subsp. fetus (strain 82-40).